The following is a 126-amino-acid chain: C-X-C motif chemokine 9 (126 aa).

Residues 1–21 (MKSAVLFLLGIIFLEQCGVRG) form the signal peptide. 2 disulfides stabilise this stretch: Cys30/Cys57 and Cys32/Cys73. N-linked (GlcNAc...) asparagine glycosylation occurs at Asn58. Residues 91–126 (KISQKKKQKRGKKHQKNMKNRKPKTPQSRRRSRKTT) form a disordered region. Residues 93-126 (SQKKKQKRGKKHQKNMKNRKPKTPQSRRRSRKTT) show a composition bias toward basic residues.

This sequence belongs to the intercrine alpha (chemokine CxC) family.

It localises to the secreted. Functionally, may be a cytokine that affects the growth, movement, or activation state of cells that participate in immune and inflammatory response. This is C-X-C motif chemokine 9 (Cxcl9) from Mus musculus (Mouse).